A 187-amino-acid chain; its full sequence is Chromophore lyase CpcS/CpeS 2 (187 aa).

Belongs to the CpcS/CpeS biliprotein lyase family.

Covalently attaches a chromophore to Cys residue(s) of phycobiliproteins. This is Chromophore lyase CpcS/CpeS 2 from Synechococcus sp. (strain JA-3-3Ab) (Cyanobacteria bacterium Yellowstone A-Prime).